We begin with the raw amino-acid sequence, 402 residues long: Argininosuccinate synthase (402 aa).

Residues 9–17 (AYSGGLDTS) and Ala36 each bind ATP. Tyr87 and Ser92 together coordinate L-citrulline. Gly117 lines the ATP pocket. 3 residues coordinate L-aspartate: Thr119, Asn123, and Asp124. Asn123 is a binding site for L-citrulline. Residues Arg127, Ser176, Ser185, Glu261, and Tyr273 each contribute to the L-citrulline site.

The protein belongs to the argininosuccinate synthase family. Type 1 subfamily. In terms of assembly, homotetramer.

The protein localises to the cytoplasm. The enzyme catalyses L-citrulline + L-aspartate + ATP = 2-(N(omega)-L-arginino)succinate + AMP + diphosphate + H(+). It participates in amino-acid biosynthesis; L-arginine biosynthesis; L-arginine from L-ornithine and carbamoyl phosphate: step 2/3. The chain is Argininosuccinate synthase from Deinococcus radiodurans (strain ATCC 13939 / DSM 20539 / JCM 16871 / CCUG 27074 / LMG 4051 / NBRC 15346 / NCIMB 9279 / VKM B-1422 / R1).